The primary structure comprises 804 residues: Leucine--tRNA ligase (804 aa).

Positions 40 to 51 (PYPSGQGLHVGH) match the 'HIGH' region motif. A 'KMSKS' region motif is present at residues 576 to 580 (KMSKS). Residue Lys579 participates in ATP binding.

Belongs to the class-I aminoacyl-tRNA synthetase family.

The protein resides in the cytoplasm. The enzyme catalyses tRNA(Leu) + L-leucine + ATP = L-leucyl-tRNA(Leu) + AMP + diphosphate. In Oceanobacillus iheyensis (strain DSM 14371 / CIP 107618 / JCM 11309 / KCTC 3954 / HTE831), this protein is Leucine--tRNA ligase.